We begin with the raw amino-acid sequence, 384 residues long: GTPase Obg (384 aa).

In terms of domain architecture, Obg spans 1–159; sequence MKFIDEAKIE…RSLQLELKVL (159 aa). A disordered region spans residues 20 to 46; that stretch reads ATSFRREKFVPRGGPDGGDGGKGGSVW. Positions 33 to 43 are enriched in gly residues; that stretch reads GPDGGDGGKGG. The region spanning 160 to 348 is the OBG-type G domain; the sequence is ADVGLLGMPN…LVHQINQYLT (189 aa). GTP-binding positions include 166–173, 191–195, 213–216, 284–287, and 329–331; these read GMPNAGKS, FTTLH, DIPG, NKLD, and SAL. Residues S173 and T193 each coordinate Mg(2+).

Belongs to the TRAFAC class OBG-HflX-like GTPase superfamily. OBG GTPase family. Monomer. Mg(2+) serves as cofactor.

It localises to the cytoplasm. Its function is as follows. An essential GTPase which binds GTP, GDP and possibly (p)ppGpp with moderate affinity, with high nucleotide exchange rates and a fairly low GTP hydrolysis rate. Plays a role in control of the cell cycle, stress response, ribosome biogenesis and in those bacteria that undergo differentiation, in morphogenesis control. The polypeptide is GTPase Obg (Neisseria meningitidis serogroup C (strain 053442)).